The chain runs to 577 residues: MNIQALLSEKVRQAMIAAGAPADCEPQVRQSAKVQFGDYQANGMMAVAKKLGMAPRQLAEQVLTHLDLNGIASKVEIAGPGFINIFLDPAFLAEHVQQALASDRLGVATPEKQTIVVDYSAPNVAKEMHVGHLRSTIIGDAAVRTLEFLGHKVIRANHVGDWGTQFGMLIAWLEKQQQENAGEMELADLEGFYRDAKKHYDEDEEFAERARNYVVKLQSGDEYFREMWRKLVDITMTQNQITYDRLNVTLTRDDVMGESLYNPMLPGIVADLKAKGLAVESEGATVVFLDEFKNKEGEPMGVIIQKKDGGYLYTTTDIACAKYRYETLHAERVLYYIDSRQHQHLMQAWAIVRKAGYVPESVPLEHHMFGMMLGKDGKPFKTRAGGTVKLADLLDEALERARRLVAEKNPDMSADELEKLANAVGIGAVKYADLSKNRTTDYIFDWDNMLAFEGNTAPYMQYAYTRVLSVFRKAEIDEEQLAAAPVIIREDREAQLAARLLQFEETLTVVAREGTPHVMCAYLYDLAGLFSGFYEHCPILSAENEEVRNSRLKLAQLTAKTLKLGLDTLGIETVERM.

A 'HIGH' region motif is present at residues 122–132 (PNVAKEMHVGH).

It belongs to the class-I aminoacyl-tRNA synthetase family. In terms of assembly, monomer.

The protein localises to the cytoplasm. The enzyme catalyses tRNA(Arg) + L-arginine + ATP = L-arginyl-tRNA(Arg) + AMP + diphosphate. This is Arginine--tRNA ligase from Shigella dysenteriae serotype 1 (strain Sd197).